Reading from the N-terminus, the 630-residue chain is DNA mismatch repair protein MutL (630 aa).

This sequence belongs to the DNA mismatch repair MutL/HexB family.

In terms of biological role, this protein is involved in the repair of mismatches in DNA. It is required for dam-dependent methyl-directed DNA mismatch repair. May act as a 'molecular matchmaker', a protein that promotes the formation of a stable complex between two or more DNA-binding proteins in an ATP-dependent manner without itself being part of a final effector complex. The polypeptide is DNA mismatch repair protein MutL (Lactobacillus johnsonii (strain CNCM I-12250 / La1 / NCC 533)).